A 127-amino-acid chain; its full sequence is Unclassified hydrophobin 5 (127 aa).

An N-terminal signal peptide occupies residues 1–24; it reads MFNKQTNAIVLLFTFALFATLAVA. Intrachain disulfides connect cysteine 39–cysteine 107, cysteine 46–cysteine 101, cysteine 47–cysteine 92, and cysteine 108–cysteine 121.

Belongs to the fungal hydrophobin family. As to quaternary structure, self-assembles to form functional amyloid fibrils called rodlets. Self-assembly into fibrillar rodlets occurs spontaneously at hydrophobic:hydrophilic interfaces and the rodlets further associate laterally to form amphipathic monolayers.

The protein resides in the secreted. The protein localises to the cell wall. Its function is as follows. Aerial growth, conidiation, and dispersal of filamentous fungi in the environment rely upon a capability of their secreting small amphipathic proteins called hydrophobins (HPBs) with low sequence identity. Class I can self-assemble into an outermost layer of rodlet bundles on aerial cell surfaces, conferring cellular hydrophobicity that supports fungal growth, development and dispersal; whereas Class II form highly ordered films at water-air interfaces through intermolecular interactions but contribute nothing to the rodlet structure. The protein is Unclassified hydrophobin 5 of Pleurotus ostreatus (strain PC15) (Oyster mushroom).